The following is a 231-amino-acid chain: MKLAVIGAMEEEVTILRSKLKDAKQEMIAHCEFTTGSYEGVEVILLKSGIGKVNAAISTTLLLDRFKPDYVINTGSAGGFHHTLNVGDVVISTDVRHHDVDVTAFDYEYGQVPGLPAAYKADEKLISITEEAVSELNGIQVAKGTIATGDSFMNDPKRVEDVRAKFADLYAVEMEAAAVAQVCHQFKTPFVVIRALSDIAGKESDVSFDKFLEQAAVHSTELVLNVIKRIH.

Glu-12 serves as the catalytic Proton acceptor. Substrate-binding positions include Gly-78, Met-153, and Met-174–Glu-175. Asp-198 acts as the Proton donor in catalysis.

It belongs to the PNP/UDP phosphorylase family. MtnN subfamily.

It carries out the reaction S-adenosyl-L-homocysteine + H2O = S-(5-deoxy-D-ribos-5-yl)-L-homocysteine + adenine. The enzyme catalyses S-methyl-5'-thioadenosine + H2O = 5-(methylsulfanyl)-D-ribose + adenine. It catalyses the reaction 5'-deoxyadenosine + H2O = 5-deoxy-D-ribose + adenine. It functions in the pathway amino-acid biosynthesis; L-methionine biosynthesis via salvage pathway; S-methyl-5-thio-alpha-D-ribose 1-phosphate from S-methyl-5'-thioadenosine (hydrolase route): step 1/2. Catalyzes the irreversible cleavage of the glycosidic bond in both 5'-methylthioadenosine (MTA) and S-adenosylhomocysteine (SAH/AdoHcy) to adenine and the corresponding thioribose, 5'-methylthioribose and S-ribosylhomocysteine, respectively. Also cleaves 5'-deoxyadenosine, a toxic by-product of radical S-adenosylmethionine (SAM) enzymes, into 5-deoxyribose and adenine. This Bacillus velezensis (strain DSM 23117 / BGSC 10A6 / LMG 26770 / FZB42) (Bacillus amyloliquefaciens subsp. plantarum) protein is 5'-methylthioadenosine/S-adenosylhomocysteine nucleosidase.